The primary structure comprises 92 residues: Small ribosomal subunit protein uS19 (92 aa).

It belongs to the universal ribosomal protein uS19 family.

Functionally, protein S19 forms a complex with S13 that binds strongly to the 16S ribosomal RNA. The polypeptide is Small ribosomal subunit protein uS19 (Methylorubrum extorquens (strain CM4 / NCIMB 13688) (Methylobacterium extorquens)).